The sequence spans 250 residues: tRNA (guanine-N(7)-)-methyltransferase (250 aa).

4 residues coordinate S-adenosyl-L-methionine: E86, E111, D138, and D161. D161 is a catalytic residue. Residues K165, D197, and 229–232 (TEFE) contribute to the substrate site.

It belongs to the class I-like SAM-binding methyltransferase superfamily. TrmB family.

The enzyme catalyses guanosine(46) in tRNA + S-adenosyl-L-methionine = N(7)-methylguanosine(46) in tRNA + S-adenosyl-L-homocysteine. The protein operates within tRNA modification; N(7)-methylguanine-tRNA biosynthesis. In terms of biological role, catalyzes the formation of N(7)-methylguanine at position 46 (m7G46) in tRNA. The protein is tRNA (guanine-N(7)-)-methyltransferase of Treponema pallidum (strain Nichols).